The following is a 138-amino-acid chain: MKVLGLDVGDKKIGVALSDELGLTAQGLTVIYRTSLKKDLEEIKKIIDLHHVTEVVIGYPRNMNGTAGPRAELVKRFARELYKFTGIKPVFWDERLSTVEAEKLLISGDISRRKRKKVIDKLAATLILSGYLNYKSKN.

It belongs to the YqgF nuclease family.

It localises to the cytoplasm. Could be a nuclease involved in processing of the 5'-end of pre-16S rRNA. The polypeptide is Putative pre-16S rRNA nuclease (Carboxydothermus hydrogenoformans (strain ATCC BAA-161 / DSM 6008 / Z-2901)).